The chain runs to 385 residues: Chaperone protein DnaJ 2 (385 aa).

The 66-residue stretch at 10–75 (DYYKELGVSS…AKRKEYDETR (66 aa)) folds into the J domain. The segment at 155-233 (GVTVPLRMTS…CHGSGIQNRT (79 aa)) adopts a CR-type zinc-finger fold. Zn(2+) is bound by residues C168, C171, C185, C188, C207, C210, C221, and C224. CXXCXGXG motif repeat units lie at residues 168–175 (CTTCHGSG), 185–192 (CPICNGTG), 207–214 (CDGCRGTG), and 221–228 (CVDCHGSG).

It belongs to the DnaJ family. In terms of assembly, homodimer. Zn(2+) is required as a cofactor.

Its subcellular location is the cytoplasm. Functionally, participates actively in the response to hyperosmotic and heat shock by preventing the aggregation of stress-denatured proteins and by disaggregating proteins, also in an autonomous, DnaK-independent fashion. Unfolded proteins bind initially to DnaJ; upon interaction with the DnaJ-bound protein, DnaK hydrolyzes its bound ATP, resulting in the formation of a stable complex. GrpE releases ADP from DnaK; ATP binding to DnaK triggers the release of the substrate protein, thus completing the reaction cycle. Several rounds of ATP-dependent interactions between DnaJ, DnaK and GrpE are required for fully efficient folding. Also involved, together with DnaK and GrpE, in the DNA replication of plasmids through activation of initiation proteins. The sequence is that of Chaperone protein DnaJ 2 from Nocardia farcinica (strain IFM 10152).